The chain runs to 431 residues: Enolase (431 aa).

Gln-175 is a (2R)-2-phosphoglycerate binding site. The Proton donor role is filled by Glu-217. Mg(2+)-binding residues include Asp-254, Glu-295, and Asp-322. (2R)-2-phosphoglycerate contacts are provided by Lys-347, Arg-376, Ser-377, and Lys-398. The active-site Proton acceptor is the Lys-347.

The protein belongs to the enolase family. Mg(2+) serves as cofactor.

It localises to the cytoplasm. The protein localises to the secreted. Its subcellular location is the cell surface. It catalyses the reaction (2R)-2-phosphoglycerate = phosphoenolpyruvate + H2O. Its pathway is carbohydrate degradation; glycolysis; pyruvate from D-glyceraldehyde 3-phosphate: step 4/5. Its function is as follows. Catalyzes the reversible conversion of 2-phosphoglycerate (2-PG) into phosphoenolpyruvate (PEP). It is essential for the degradation of carbohydrates via glycolysis. The sequence is that of Enolase from Anaplasma marginale (strain St. Maries).